A 493-amino-acid chain; its full sequence is Cobyric acid synthase (493 aa).

In terms of domain architecture, GATase cobBQ-type spans 260 to 427 (RLSVAAIRLP…RHGYLQDDPA (168 aa)). H419 is an active-site residue.

Belongs to the CobB/CobQ family. CobQ subfamily.

The protein operates within cofactor biosynthesis; adenosylcobalamin biosynthesis. Functionally, catalyzes amidations at positions B, D, E, and G on adenosylcobyrinic A,C-diamide. NH(2) groups are provided by glutamine, and one molecule of ATP is hydrogenolyzed for each amidation. The polypeptide is Cobyric acid synthase (Corynebacterium efficiens (strain DSM 44549 / YS-314 / AJ 12310 / JCM 11189 / NBRC 100395)).